A 1214-amino-acid chain; its full sequence is Reverse gyrase (1214 aa).

The RG N-terminal-type zinc finger occupies 1 to 37 (MKAIYRDMCPNCRGAITDERLAAKNPCDACLDEPISM). 4 residues coordinate Zn(2+): C9, C12, C27, and C30. ATP-binding positions include Q89 and 106 to 113 (APTGMGKS). One can recognise a Helicase ATP-binding domain in the interval 93-252 (VKRIIKGKSF…WEIIKLKKQL (160 aa)). The DEAD box motif lies at 213–216 (DDVD). The tract at residues 635–1214 (DLVKSALMIV…YEEILRYVKS (580 aa)) is topoisomerase I. In terms of domain architecture, Toprim spans 639–802 (SALMIVESPN…VIKRIEFHEV (164 aa)). Mg(2+) is bound at residue E645. The segment at 719-748 (IKRCRDCGHQFVDWEEKGVCPRCGSRNVYD) adopts an RG C-terminal-type zinc-finger fold. Positions 722, 725, 738, and 741 each coordinate Zn(2+). A Mg(2+)-binding site is contributed by D771. In terms of domain architecture, Topo IA-type catalytic spans 818 to 1212 (NEDRVNAQLV…ELYEEILRYV (395 aa)). Y955 (O-(5'-phospho-DNA)-tyrosine intermediate) is an active-site residue.

The protein in the N-terminal section; belongs to the DEAD box helicase family. DDVD subfamily. This sequence in the C-terminal section; belongs to the type IA topoisomerase family. As to quaternary structure, monomer. Zn(2+) serves as cofactor. It depends on Mg(2+) as a cofactor.

The protein resides in the cytoplasm. The catalysed reaction is ATP + H2O = ADP + phosphate + H(+). Modifies the topological state of DNA by introducing positive supercoils in an ATP-dependent process. Increases the linking number in steps of +1. Binds to single-stranded DNA, transiently cleaves and then rejoins the ends, introducing a positive supercoil in the process. The scissile phosphodiester is attacked by the catalytic tyrosine of the enzyme, resulting in the formation of a DNA-(5'-phosphotyrosyl)-enzyme intermediate. Probably involved in rewinding DNA strands in regions of the chromosome that have opened up to allow replication, transcription, DNA repair and/or for DNA protection. This chain is Reverse gyrase, found in Pyrococcus furiosus (strain ATCC 43587 / DSM 3638 / JCM 8422 / Vc1).